Here is a 644-residue protein sequence, read N- to C-terminus: MAKIIGIDLGTTNSCVAVMEGDKPKVIENSEGHRTTPSIVAFTDDNEILVGQSAKRQSVTNPEKTLFAIKRLIGRRFDDPIVQKDIKMVPYKIMKADNGDAWVRVKDQDKAPPQISAEVLRKMKKTAEDYLGEEVKEAVITVPAYFNDSQRQATKDAGRIAGLEVKRIINEPTAAALAYGMDKKRGDSVIAVYDLGGGTFDISIIEIAEVDGEHQFEVLATNGDTFLGGEDFDLALIEYLASEFKKDTGIDLHNDPLALQRLKEAAEKAKIELSSAQQTDVNLPYITADASGPKHLNIKLTRAKLESLVEKLVERTIEPCKTALKDAGLTVSQINEVILVGGQTRMPLVQKTVEEFFGKEPRKDVNPDEAVAVGAAIQAAVLSGEVKDILLLDVTPLSLGIETMGGVMTKLIEKNTTIPTKATQVFSTADDNQTAVTVHVLQGEREQASANKSLGRFDLRDIPPAPRGVPQIEVTFDIDANGILNVSAKDKATGKAQSIVIKASSGLSEEEVAAMVKDAQSHAEEDKKFKEMAELRNQADSLIHSCEKSMKDLADELSEDEKRGIETAISELKEAVQGTDKARIEDKLKVLTDASAKMAERIYAKKSSEGQAAQGQTQSQESTKPAEEGVVDAEFEEVKEEDKK.

Phosphothreonine; by autocatalysis is present on threonine 199. Positions 605-644 (KKSSEGQAAQGQTQSQESTKPAEEGVVDAEFEEVKEEDKK) are disordered. The span at 609 to 623 (EGQAAQGQTQSQEST) shows a compositional bias: polar residues. Residues 629-644 (GVVDAEFEEVKEEDKK) show a composition bias toward acidic residues.

It belongs to the heat shock protein 70 family.

Acts as a chaperone. This is Chaperone protein DnaK from Legionella pneumophila subsp. pneumophila (strain Philadelphia 1 / ATCC 33152 / DSM 7513).